The chain runs to 440 residues: tRNA(Ile)-lysidine synthase (440 aa).

Position 31–36 (31–36 (SGGADS)) interacts with ATP.

Belongs to the tRNA(Ile)-lysidine synthase family.

Its subcellular location is the cytoplasm. The enzyme catalyses cytidine(34) in tRNA(Ile2) + L-lysine + ATP = lysidine(34) in tRNA(Ile2) + AMP + diphosphate + H(+). Functionally, ligates lysine onto the cytidine present at position 34 of the AUA codon-specific tRNA(Ile) that contains the anticodon CAU, in an ATP-dependent manner. Cytidine is converted to lysidine, thus changing the amino acid specificity of the tRNA from methionine to isoleucine. The chain is tRNA(Ile)-lysidine synthase from Borreliella burgdorferi (strain ATCC 35210 / DSM 4680 / CIP 102532 / B31) (Borrelia burgdorferi).